Reading from the N-terminus, the 129-residue chain is Small ribosomal subunit protein uS11 (129 aa).

Part of the 30S ribosomal subunit. Interacts with proteins S7 and S18. Binds to IF-3. May be methylated on an undetermined residue.

Its function is as follows. Located on the platform of the 30S subunit, it bridges several disparate RNA helices of the 16S rRNA. Forms part of the Shine-Dalgarno cleft in the 70S ribosome. The polypeptide is Small ribosomal subunit protein uS11 (Rhodopseudomonas palustris (strain ATCC BAA-98 / CGA009)).